The chain runs to 467 residues: Acetaldehyde dehydrogenase (acetylating) EutE (467 aa).

This sequence belongs to the EutE/PduP family. Interacts with EutS, which targets it to the interior of the BMC. It depends on Has a very strong preference for NAD(+) over NADP(+). as a cofactor.

The protein resides in the bacterial microcompartment. The catalysed reaction is acetaldehyde + NAD(+) + CoA = acetyl-CoA + NADH + H(+). It functions in the pathway amine and polyamine degradation; ethanolamine degradation. Functionally, acts as the second step in ethanolamine degradation by converting acetaldehyde into acetyl-CoA. May play a role in bacterial microcompartment (BMC) assembly or maintenance. Directly targeted to the BMC. Its heterologous expression in S.cerevisiae increases the level of acetylating acetaldehyde dehydrogenase activity. The sequence is that of Acetaldehyde dehydrogenase (acetylating) EutE (eutE) from Escherichia coli (strain K12).